Consider the following 552-residue polypeptide: Histone deacetylase 15 (552 aa).

A RanBP2-type zinc finger spans residues 86 to 115 (EFVKWCCVNCTMSNPGDMVHCCICGEHKES). Residues 149–462 (STAVGFDERM…ATAVIKVLLG (314 aa)) form a histone deacetylase region. Histidine 277 serves as the catalytic Proton donor/acceptor. Zn(2+) contacts are provided by aspartate 313, histidine 315, and aspartate 404.

Belongs to the histone deacetylase family. HD type 2 subfamily. In terms of assembly, interacts with PIF3 in the dark. Interacts with HY5. Interacts with MYB96. Forms homotetramers. Requires Zn(2+) as cofactor. As to expression, expressed in stems, leaves, flowers, siliques and mature seeds.

The protein resides in the nucleus. It is found in the cytoplasm. The enzyme catalyses N(6)-acetyl-L-lysyl-[histone] + H2O = L-lysyl-[histone] + acetate. With respect to regulation, inhibited by trichostatin A (TSA), a well-known histone deacetylase inhibitor. Responsible for the deacetylation of lysine residues on the N-terminal part of the core histones (H2A, H2B, H3 and H4). Histone deacetylation gives a tag for epigenetic repression and plays an important role in transcriptional regulation, cell cycle progression and developmental events. Histone deacetylases act via the formation of large multiprotein complexes. Represses chlorophyll biosynthesis and photosynthesis in the dark. Is recruited by PIF3 to the promoters of chlorophyll biosynthetic and photosynthetic genes, and represses their transcription by histone deacetylation. Involved in the repression of hypocotyl cell elongation to promote photomorphogenesis. Is recruited by HY5 to the promoters of a subset of cell wall organization and auxin signaling-related genes, and represses gene expression by decreasing the levels of histone H4 acetylation in a light-dependent manner. Promotes abscisic acid (ABA) signaling. Is recruited by MYB96 to the promoters of a subset of Rho GTPase (ROP) genes, which repress ABA signaling at the early stages of signal transduction. Represses ROP expression by removing acetyl groups of histone H3 and H4 from the cognate regions, particularly in the presence of ABA. Represses the plant response to elevated ambient temperature by directly repressing warm temperature-responsive genes. In Arabidopsis thaliana (Mouse-ear cress), this protein is Histone deacetylase 15.